We begin with the raw amino-acid sequence, 167 residues long: ASQKRPSQRHGSKYLATASTMDHARHGFLPRHRDTGILDSIGRFFGSDRAAPKRGSGKDSHHAARTTHYGSLPQKSQRSQDENPVVHFFKNIVTPRTPPPSQGKGRGLSLSRFSWGAEGQKPGFGYGGRADYKSKGFKGAHDAQGTLSKIFKLGGRDSRSGSPMARR.

The residue at position 1 (A1) is an N-acetylalanine. 2 positions are modified to phosphoserine: S7 and S12. Y14 is modified (phosphotyrosine). The residue at position 17 (T17) is a Phosphothreonine. A Phosphoserine modification is found at S19. Residue T20 is modified to Phosphothreonine. 2 positions are modified to citrulline: R25 and R31. A Phosphothreonine modification is found at T35. The residue at position 40 (S40) is a Phosphoserine. R43 and R49 each carry omega-N-methylarginine. Residues 45-87 (FGSDRAAPKRGSGKDSHHAARTTHYGSLPQKSQRSQDENPVVH) are induces experimental autoimmune encephalomyelitis (EAE) 1. The segment at 46–114 (GSDRAAPKRG…GRGLSLSRFS (69 aa)) is disordered. Residue S56 is modified to Phosphoserine. Position 67 is a phosphothreonine (T67). Y69 carries the post-translational modification Phosphotyrosine. S76 is subject to Phosphoserine. A phosphothreonine mark is found at T94 and T97. At Q102 the chain carries Deamidated glutamine. Omega-N-methylarginine; alternate is present on R106. Residue R106 is modified to Symmetric dimethylarginine; alternate. The residue at position 114 (S114) is a Phosphoserine. Positions 114–122 (SWGAEGQKP) are induces experimental autoimmune encephalomyelitis (EAE) 2. K121 carries the N6-acetyllysine modification. Position 129 is a citrulline (R129). Residues 136–167 (GFKGAHDAQGTLSKIFKLGGRDSRSGSPMARR) form a disordered region. Q144 carries the post-translational modification Deamidated glutamine. R156 is modified (citrulline). S158 bears the Phosphoserine mark. S162 bears the Phosphoserine; by UHMK1 mark. A Citrulline modification is found at R167.

It belongs to the myelin basic protein family. In terms of assembly, homodimer. Post-translationally, at least 5 charge isomers; C1 (the most cationic, least modified, and most abundant form), C2, C3, C4 and C5 (the least cationic form); are produced as a result of optional post-translational modifications such as phosphorylation of serine or threonine residues, deamidation of glutamine or asparagine residues, citrullination and methylation of arginine residues. C1 and C2 are unphosphorylated, C3 and C4 are monophosphorylated and C5 is phosphorylated at two positions. Phosphorylated by TAOK2, VRK2, MAPK11, MAPK12, MAPK14 and MINK1. In terms of processing, proteolytically cleaved in B cell lysosomes by cathepsin CTSG which degrades the major immunogenic MBP epitope and prevents the activation of MBP-specific autoreactive T cells. Found in both the central and the peripheral nervous system.

Its subcellular location is the myelin membrane. Functionally, is, with PLP, the most abundant protein component of the myelin membrane in the CNS. Has a role in both the formation and stabilization of this compact multilayer arrangement of bilayers. Each splice variant and charge isomer may have a specialized function in the assembly of an optimized, biochemically functional myelin membrane. The sequence is that of Myelin basic protein (MBP) from Cavia porcellus (Guinea pig).